Here is a 6359-residue protein sequence, read N- to C-terminus: Bacitracin synthase 3 (6359 aa).

A domain 1 (isoleucine-activating) region spans residues 461–1034 (LHELFEEQAM…IKGLGEYIRS (574 aa)). Basic and acidic residues predominate over residues 941–953 (VDRKALPEPDRTA). The disordered stretch occupies residues 941-962 (VDRKALPEPDRTAGAENEYEAP). 5 Carrier domains span residues 961–1036 (APRN…RSTK), 1993–2067 (APRN…KKQS), 3497–3572 (APRN…ESMK), 4539–4613 (PPRN…KAES), and 6047–6122 (PPRH…KHAQ). An O-(pantetheine 4'-phosphoryl)serine mark is found at serine 996, serine 2028, and serine 3532. A domain 2 (D-phenylalanine-activating) region spans residues 1517-2064 (FEDQTLTYRQ…RIKDLAKYVK (548 aa)). Residues 2999–3570 (NKTIHQLFEE…IKDIGDFIES (572 aa)) form a domain 3 (histidine-activating) region. The tract at residues 4047 to 4612 (EQTAVVYADE…KSLSRYVKAE (566 aa)) is domain 4 (D-aspartic acid-activating). Positions 4521–4544 (IDTAALPEPQPGKETEYEPPRNET) are disordered. Positions 4531 to 4544 (PGKETEYEPPRNET) are enriched in basic and acidic residues. Residues serine 4574 and serine 6082 each carry the O-(pantetheine 4'-phosphoryl)serine modification. A domain 5 (asparagine-activating) region spans residues 5549-6129 (IHRLFEEQAE…HAQDLLKDYT (581 aa)).

It belongs to the ATP-dependent AMP-binding enzyme family. In terms of assembly, large multienzyme complex of BA1, BA2 and BA3. The cofactor is pantetheine 4'-phosphate.

The catalysed reaction is L-aspartate = D-aspartate. The enzyme catalyses L-phenylalanine + ATP + H2O = D-phenylalanine + AMP + diphosphate + H(+). It participates in antibiotic biosynthesis; bacitracin biosynthesis. Induces peptide synthesis, activates and incorporates five amino acids, forms a thiazoline ring between the first two amino acids and incorporates a D-glutamine in the fourth position. The polypeptide is Bacitracin synthase 3 (bacC) (Bacillus licheniformis).